Consider the following 307-residue polypeptide: MQAALTAFFMLFFSLLSLLGIAANGFIVLVLGREWLQYGRLLPLDMILISLGVSRFCLQLVGTVYNFYYSAHKVEYSGGLSRQFFHLHWHFLNLATFXFCSWLSVLFCVKXANITHPTFLWLKWRFPGWVPWLLLGSVLISFIITLLLFWVNYPVYQEFLIRKFSGNMTYEWNTRIEMYYLPSLKLVIWSIPCSVFLVSIMLLINSLRRHTWRMQHNGHSLQDPSTQAHTRAXKSLISFLILYVLSFLSLIIDATKFISMQNDFYWPWQTAVYLGVSVHPFILIFSNLKLRSVFWKLLLLARGFWVA.

Topologically, residues 1–7 (MQAALTA) are extracellular. A helical transmembrane segment spans residues 8–28 (FFMLFFSLLSLLGIAANGFIV). Residues 29–40 (LVLGREWLQYGR) lie on the Cytoplasmic side of the membrane. The helical transmembrane segment at 41–61 (LLPLDMILISLGVSRFCLQLV) threads the bilayer. The Extracellular segment spans residues 62-88 (GTVYNFYYSAHKVEYSGGLSRQFFHLH). Residues 89–109 (WHFLNLATFXFCSWLSVLFCV) traverse the membrane as a helical segment. Over 110–129 (KXANITHPTFLWLKWRFPGW) the chain is Cytoplasmic. A helical membrane pass occupies residues 130 to 150 (VPWLLLGSVLISFIITLLLFW). Over 151–183 (VNYPVYQEFLIRKFSGNMTYEWNTRIEMYYLPS) the chain is Extracellular. Asparagine 167 carries an N-linked (GlcNAc...) asparagine glycan. The helical transmembrane segment at 184-204 (LKLVIWSIPCSVFLVSIMLLI) threads the bilayer. The Cytoplasmic segment spans residues 205–234 (NSLRRHTWRMQHNGHSLQDPSTQAHTRAXK). Residues 235–255 (SLISFLILYVLSFLSLIIDAT) form a helical membrane-spanning segment. The Extracellular portion of the chain corresponds to 256-264 (KFISMQNDF). A helical membrane pass occupies residues 265-285 (YWPWQTAVYLGVSVHPFILIF). The Cytoplasmic segment spans residues 286-307 (SNLKLRSVFWKLLLLARGFWVA).

Belongs to the G-protein coupled receptor T2R family.

It is found in the membrane. Functionally, receptor that may play a role in the perception of bitterness and is gustducin-linked. May play a role in sensing the chemical composition of the gastrointestinal content. The activity of this receptor may stimulate alpha gustducin, mediate PLC-beta-2 activation and lead to the gating of TRPM5. In Pongo pygmaeus (Bornean orangutan), this protein is Taste receptor type 2 member 41 (TAS2R41).